Consider the following 154-residue polypeptide: 6,7-dimethyl-8-ribityllumazine synthase (154 aa).

5-amino-6-(D-ribitylamino)uracil contacts are provided by residues Phe22, 56–58, and 80–82; these read SFE and AVI. 85–86 is a (2S)-2-hydroxy-3-oxobutyl phosphate binding site; the sequence is ST. His88 functions as the Proton donor in the catalytic mechanism. Position 113 (Tyr113) interacts with 5-amino-6-(D-ribitylamino)uracil. Arg127 contacts (2S)-2-hydroxy-3-oxobutyl phosphate.

The protein belongs to the DMRL synthase family. In terms of assembly, forms an icosahedral capsid composed of 60 subunits, arranged as a dodecamer of pentamers.

It carries out the reaction (2S)-2-hydroxy-3-oxobutyl phosphate + 5-amino-6-(D-ribitylamino)uracil = 6,7-dimethyl-8-(1-D-ribityl)lumazine + phosphate + 2 H2O + H(+). The protein operates within cofactor biosynthesis; riboflavin biosynthesis; riboflavin from 2-hydroxy-3-oxobutyl phosphate and 5-amino-6-(D-ribitylamino)uracil: step 1/2. Its function is as follows. Catalyzes the formation of 6,7-dimethyl-8-ribityllumazine by condensation of 5-amino-6-(D-ribitylamino)uracil with 3,4-dihydroxy-2-butanone 4-phosphate. This is the penultimate step in the biosynthesis of riboflavin. The chain is 6,7-dimethyl-8-ribityllumazine synthase from Sulfurihydrogenibium sp. (strain YO3AOP1).